The following is a 448-amino-acid chain: Alginate biosynthesis transcriptional regulatory protein AlgB (448 aa).

The Response regulatory domain maps to 10-124 (RILLVDDESA…QLRLATAKQL (115 aa)). Residue Asp-59 is modified to 4-aspartylphosphate. The Sigma-54 factor interaction domain occupies 147-376 (LDSHSPAMMA…LRNVVERASI (230 aa)). ATP contacts are provided by residues 175-182 (GESGTGKG) and 238-247 (ADGGTLFLDE). The segment at residues 425–444 (LDQAAKTLGIDASTLYRKRK) is a DNA-binding region (H-T-H motif).

The protein operates within glycan biosynthesis; alginate biosynthesis [regulation]. Functionally, positive regulator of the alginate biosynthetic gene algD. This Pseudomonas putida (strain ATCC 47054 / DSM 6125 / CFBP 8728 / NCIMB 11950 / KT2440) protein is Alginate biosynthesis transcriptional regulatory protein AlgB (algB).